Consider the following 480-residue polypeptide: Protein nucleotidyltransferase YdiU (480 aa).

ATP is bound by residues glycine 87, glycine 89, arginine 90, lysine 110, aspartate 122, glycine 123, arginine 173, and arginine 180. Catalysis depends on aspartate 245, which acts as the Proton acceptor. Asparagine 246 and aspartate 255 together coordinate Mg(2+). Aspartate 255 serves as a coordination point for ATP.

Belongs to the SELO family. Requires Mg(2+) as cofactor. Mn(2+) serves as cofactor.

The catalysed reaction is L-seryl-[protein] + ATP = 3-O-(5'-adenylyl)-L-seryl-[protein] + diphosphate. It catalyses the reaction L-threonyl-[protein] + ATP = 3-O-(5'-adenylyl)-L-threonyl-[protein] + diphosphate. The enzyme catalyses L-tyrosyl-[protein] + ATP = O-(5'-adenylyl)-L-tyrosyl-[protein] + diphosphate. It carries out the reaction L-histidyl-[protein] + UTP = N(tele)-(5'-uridylyl)-L-histidyl-[protein] + diphosphate. The catalysed reaction is L-seryl-[protein] + UTP = O-(5'-uridylyl)-L-seryl-[protein] + diphosphate. It catalyses the reaction L-tyrosyl-[protein] + UTP = O-(5'-uridylyl)-L-tyrosyl-[protein] + diphosphate. Its function is as follows. Nucleotidyltransferase involved in the post-translational modification of proteins. It can catalyze the addition of adenosine monophosphate (AMP) or uridine monophosphate (UMP) to a protein, resulting in modifications known as AMPylation and UMPylation. The sequence is that of Protein nucleotidyltransferase YdiU from Jannaschia sp. (strain CCS1).